A 62-amino-acid chain; its full sequence is Photosystem II reaction center protein Z (62 aa).

2 consecutive transmembrane segments (helical) span residues 8–28 (VLTALVFFSFVMVVAVPVAYA) and 41–61 (YVGSAIWIGLVLLVAILNFLV).

The protein belongs to the PsbZ family. PSII is composed of 1 copy each of membrane proteins PsbA, PsbB, PsbC, PsbD, PsbE, PsbF, PsbH, PsbI, PsbJ, PsbK, PsbL, PsbM, PsbT, PsbX, PsbY, PsbZ, Psb30/Ycf12, peripheral proteins PsbO, CyanoQ (PsbQ), PsbU, PsbV and a large number of cofactors. It forms dimeric complexes.

It is found in the cellular thylakoid membrane. Functionally, may control the interaction of photosystem II (PSII) cores with the light-harvesting antenna, regulates electron flow through the 2 photosystem reaction centers. PSII is a light-driven water plastoquinone oxidoreductase, using light energy to abstract electrons from H(2)O, generating a proton gradient subsequently used for ATP formation. The protein is Photosystem II reaction center protein Z of Crocosphaera subtropica (strain ATCC 51142 / BH68) (Cyanothece sp. (strain ATCC 51142)).